The following is a 545-amino-acid chain: Esterase-5B (545 aa).

An N-terminal signal peptide occupies residues Met1–Ala19. The cysteines at positions 84 and 103 are disulfide-linked. Asn113 carries an N-linked (GlcNAc...) asparagine glycan. Ser207 serves as the catalytic Acyl-ester intermediate. Cys259 and Cys271 form a disulfide bridge. Asn421 carries N-linked (GlcNAc...) asparagine glycosylation. His467 serves as the catalytic Charge relay system. Residue Asn507 is glycosylated (N-linked (GlcNAc...) asparagine). Cys515 and Cys536 are joined by a disulfide.

The protein belongs to the type-B carboxylesterase/lipase family. Homodimer.

It is found in the secreted. The enzyme catalyses a carboxylic ester + H2O = an alcohol + a carboxylate + H(+). The chain is Esterase-5B (Est-5B) from Drosophila persimilis (Fruit fly).